The chain runs to 103 residues: Ig kappa-b5 chain C region (103 aa).

The 95-residue stretch at 5–99 (PTVLIFPPAP…GAGSVVQSFS (95 aa)) folds into the Ig-like domain. C26 and C85 are oxidised to a cystine.

The protein is Ig kappa-b5 chain C region of Oryctolagus cuniculus (Rabbit).